Here is a 151-residue protein sequence, read N- to C-terminus: Large ribosomal subunit protein bL9 (151 aa).

It belongs to the bacterial ribosomal protein bL9 family.

Its function is as follows. Binds to the 23S rRNA. The protein is Large ribosomal subunit protein bL9 of Oenococcus oeni (strain ATCC BAA-331 / PSU-1).